We begin with the raw amino-acid sequence, 241 residues long: Kynurenine formamidase (241 aa).

The short motif at 23–27 is the HGGXW element; the sequence is HGGAW. Ser-95 serves as the catalytic Nucleophile. Residues Asp-191 and His-223 contribute to the active site.

The protein belongs to the kynurenine formamidase family. In terms of assembly, homodimer.

The enzyme catalyses N-formyl-L-kynurenine + H2O = L-kynurenine + formate + H(+). It functions in the pathway amino-acid degradation; L-tryptophan degradation via kynurenine pathway; L-kynurenine from L-tryptophan: step 2/2. Catalyzes the hydrolysis of N-formyl-L-kynurenine to L-kynurenine, the second step in the kynurenine pathway of tryptophan degradation. Kynurenine may be further oxidized to nicotinic acid, NAD(H) and NADP(H). Required for elimination of toxic metabolites. This chain is Kynurenine formamidase, found in Eremothecium gossypii (strain ATCC 10895 / CBS 109.51 / FGSC 9923 / NRRL Y-1056) (Yeast).